The following is a 1361-amino-acid chain: DNA-directed RNA polymerase subunit beta (1361 aa).

It belongs to the RNA polymerase beta chain family. The RNAP catalytic core consists of 2 alpha, 1 beta, 1 beta' and 1 omega subunit. When a sigma factor is associated with the core the holoenzyme is formed, which can initiate transcription.

It carries out the reaction RNA(n) + a ribonucleoside 5'-triphosphate = RNA(n+1) + diphosphate. Functionally, DNA-dependent RNA polymerase catalyzes the transcription of DNA into RNA using the four ribonucleoside triphosphates as substrates. The sequence is that of DNA-directed RNA polymerase subunit beta from Cellvibrio japonicus (strain Ueda107) (Pseudomonas fluorescens subsp. cellulosa).